The chain runs to 485 residues: Aspartyl/glutamyl-tRNA(Asn/Gln) amidotransferase subunit B (485 aa).

It belongs to the GatB/GatE family. GatB subfamily. In terms of assembly, heterotrimer of A, B and C subunits.

It carries out the reaction L-glutamyl-tRNA(Gln) + L-glutamine + ATP + H2O = L-glutaminyl-tRNA(Gln) + L-glutamate + ADP + phosphate + H(+). It catalyses the reaction L-aspartyl-tRNA(Asn) + L-glutamine + ATP + H2O = L-asparaginyl-tRNA(Asn) + L-glutamate + ADP + phosphate + 2 H(+). Its function is as follows. Allows the formation of correctly charged Asn-tRNA(Asn) or Gln-tRNA(Gln) through the transamidation of misacylated Asp-tRNA(Asn) or Glu-tRNA(Gln) in organisms which lack either or both of asparaginyl-tRNA or glutaminyl-tRNA synthetases. The reaction takes place in the presence of glutamine and ATP through an activated phospho-Asp-tRNA(Asn) or phospho-Glu-tRNA(Gln). The protein is Aspartyl/glutamyl-tRNA(Asn/Gln) amidotransferase subunit B of Bordetella petrii (strain ATCC BAA-461 / DSM 12804 / CCUG 43448).